A 232-amino-acid polypeptide reads, in one-letter code: 7-cyano-7-deazaguanine synthase (232 aa).

Residue 8-18 coordinates ATP; the sequence is FSGGQDSTTCL. Residues Cys-187, Cys-196, Cys-199, and Cys-202 each coordinate Zn(2+).

The protein belongs to the QueC family. It depends on Zn(2+) as a cofactor.

It carries out the reaction 7-carboxy-7-deazaguanine + NH4(+) + ATP = 7-cyano-7-deazaguanine + ADP + phosphate + H2O + H(+). The protein operates within purine metabolism; 7-cyano-7-deazaguanine biosynthesis. Its function is as follows. Catalyzes the ATP-dependent conversion of 7-carboxy-7-deazaguanine (CDG) to 7-cyano-7-deazaguanine (preQ(0)). The sequence is that of 7-cyano-7-deazaguanine synthase from Vibrio vulnificus (strain YJ016).